Here is a 91-residue protein sequence, read N- to C-terminus: Sm-like protein LSM6A (91 aa).

Residues 14 to 86 (TPADFLKSIR…VLYISTVNMT (73 aa)) enclose the Sm domain.

The protein belongs to the snRNP Sm proteins family. Component of the heptameric LSM1-LSM7 complex that forms a seven-membered ring structure with a donut shape. The LSM subunits are arranged in the order LSM1, LSM2, LSM3, LSM6, LSM5, LSM7 and LSM4. Component of the heptameric LSM2-LSM8 complex that forms a seven-membered ring structure with a donut shape. The LSM subunits are arranged in the order LSM8, LSM2, LSM3, LSM6, LSM5, LSM7 and LSM4. LSM6A subunit interacts only with its two neighboring subunits, LSM3A or LSM3B and LSM5. As to expression, expressed in roots, leaves, stems, flowers and siliques.

It localises to the cytoplasm. The protein resides in the nucleus. Its function is as follows. Component of LSM protein complexes, which are involved in RNA processing. Component of the cytoplasmic LSM1-LSM7 complex which is involved in mRNA degradation by promoting decapping and leading to accurate 5'-3' mRNA decay. The cytoplasmic LSM1-LSM7 complex regulates developmental gene expression by the decapping of specific development-related transcripts. Component of the nuclear LSM2-LSM8 complex which is involved splicing nuclear mRNAs. LSM2-LSM8 binds directly to the U6 small nuclear RNAs (snRNAs) and is essential for accurate splicing of selected development-related mRNAs through the stabilization of the spliceosomal U6 snRNA. Plays a critical role in the regulation of development-related gene expression. The polypeptide is Sm-like protein LSM6A (Arabidopsis thaliana (Mouse-ear cress)).